The following is a 392-amino-acid chain: DNA polymerase IV (392 aa).

The UmuC domain maps to 6 to 186 (IVHLDADAFF…LPIGKLPGVG (181 aa)). Mg(2+)-binding residues include Asp10 and Asp103. Glu104 is an active-site residue.

It belongs to the DNA polymerase type-Y family. In terms of assembly, monomer. The cofactor is Mg(2+).

The protein resides in the cytoplasm. It catalyses the reaction DNA(n) + a 2'-deoxyribonucleoside 5'-triphosphate = DNA(n+1) + diphosphate. Poorly processive, error-prone DNA polymerase involved in untargeted mutagenesis. Copies undamaged DNA at stalled replication forks, which arise in vivo from mismatched or misaligned primer ends. These misaligned primers can be extended by PolIV. Exhibits no 3'-5' exonuclease (proofreading) activity. May be involved in translesional synthesis, in conjunction with the beta clamp from PolIII. This is DNA polymerase IV from Opitutus terrae (strain DSM 11246 / JCM 15787 / PB90-1).